A 400-amino-acid chain; its full sequence is Carnosine N-methyltransferase (400 aa).

The interval 1-51 (MQRRQRAPPASQPAQDGGRSEDVEVQFSAGRLGSAAPAGPPARGTAEDEER) is disordered. Over residues 28-44 (SAGRLGSAAPAGPPARG) the composition is skewed to low complexity. The S-adenosyl-L-methionine site is built by glutamine 155, arginine 158, glycine 199, glutamate 220, aspartate 286, phenylalanine 287, and cysteine 303. Aspartate 307 lines the carnosine pocket. Tyrosine 315 is an S-adenosyl-L-methionine binding site. 2 residues coordinate carnosine: histidine 338 and tyrosine 389.

The protein belongs to the carnosine N-methyltransferase family. As to quaternary structure, homodimer. Each monomer accommodates one molecule of carnosine in its active pocket, precisely anchoring the histidine imidazole ring such that only N1 is exposed and deprotonated for methylation.

The protein resides in the cytoplasm. Its subcellular location is the cytosol. It is found in the nucleus. It carries out the reaction carnosine + S-adenosyl-L-methionine = anserine + S-adenosyl-L-homocysteine + H(+). N-methyltransferase that catalyzes the formation of anserine (beta-alanyl-N(Pi)-methyl-L-histidine) from carnosine. Anserine, a methylated derivative of carnosine (beta-alanyl-L-histidine), is an abundant constituent of vertebrate skeletal muscles. Also methylates other L-histidine-containing di- and tripeptides such as Gly-Gly-His, Gly-His and homocarnosine (GABA-His). The sequence is that of Carnosine N-methyltransferase from Mus musculus (Mouse).